An 80-amino-acid polypeptide reads, in one-letter code: MSCCGGNCGCGSSCQCGNGCGGCKYSEVEPTTTTTFLADATNKGSGAASGGSEMGAENGSCGCNTCKCGTSCGCSCCNCN.

This sequence belongs to the metallothionein superfamily. Type 15 family. As to expression, highly expressed in stems. Expressed in leaves and rachis.

Functionally, metallothioneins have a high content of cysteine residues that bind various heavy metals. In Oryza sativa subsp. japonica (Rice), this protein is Metallothionein-like protein 2B (MT2B).